Consider the following 288-residue polypeptide: Bifunctional protein FolD (288 aa).

Residues 165–167 (GRS) and Ser-190 contribute to the NADP(+) site.

Belongs to the tetrahydrofolate dehydrogenase/cyclohydrolase family. Homodimer.

The catalysed reaction is (6R)-5,10-methylene-5,6,7,8-tetrahydrofolate + NADP(+) = (6R)-5,10-methenyltetrahydrofolate + NADPH. It catalyses the reaction (6R)-5,10-methenyltetrahydrofolate + H2O = (6R)-10-formyltetrahydrofolate + H(+). It functions in the pathway one-carbon metabolism; tetrahydrofolate interconversion. Its function is as follows. Catalyzes the oxidation of 5,10-methylenetetrahydrofolate to 5,10-methenyltetrahydrofolate and then the hydrolysis of 5,10-methenyltetrahydrofolate to 10-formyltetrahydrofolate. This Bdellovibrio bacteriovorus (strain ATCC 15356 / DSM 50701 / NCIMB 9529 / HD100) protein is Bifunctional protein FolD.